The chain runs to 649 residues: Acetyl-coenzyme A synthetase (649 aa).

CoA contacts are provided by residues 191 to 194, Thr311, and Asn335; that span reads RGGR. Residues 387–389, 411–416, Asp500, and Arg515 each bind ATP; these read GEP and DTWWQT. Ser523 contributes to the CoA binding site. Arg526 contacts ATP. Mg(2+) contacts are provided by Val537, Phe539, and Ile542. Arg584 provides a ligand contact to CoA. Position 609 is an N6-acetyllysine (Lys609).

The protein belongs to the ATP-dependent AMP-binding enzyme family. Mg(2+) is required as a cofactor. Acetylated. Deacetylation by the SIR2-homolog deacetylase activates the enzyme.

It catalyses the reaction acetate + ATP + CoA = acetyl-CoA + AMP + diphosphate. In terms of biological role, catalyzes the conversion of acetate into acetyl-CoA (AcCoA), an essential intermediate at the junction of anabolic and catabolic pathways. AcsA undergoes a two-step reaction. In the first half reaction, AcsA combines acetate with ATP to form acetyl-adenylate (AcAMP) intermediate. In the second half reaction, it can then transfer the acetyl group from AcAMP to the sulfhydryl group of CoA, forming the product AcCoA. This is Acetyl-coenzyme A synthetase from Vibrio cholerae serotype O1 (strain ATCC 39315 / El Tor Inaba N16961).